The primary structure comprises 117 residues: Large ribosomal subunit protein uL18 (117 aa).

Belongs to the universal ribosomal protein uL18 family. As to quaternary structure, part of the 50S ribosomal subunit; part of the 5S rRNA/L5/L18/L25 subcomplex. Contacts the 5S and 23S rRNAs.

This is one of the proteins that bind and probably mediate the attachment of the 5S RNA into the large ribosomal subunit, where it forms part of the central protuberance. The protein is Large ribosomal subunit protein uL18 of Chromobacterium violaceum (strain ATCC 12472 / DSM 30191 / JCM 1249 / CCUG 213 / NBRC 12614 / NCIMB 9131 / NCTC 9757 / MK).